Reading from the N-terminus, the 260-residue chain is MELLQVTILFLLPSICSSNSTGVLEAANNSLVVTTIKTSITTPNTESLQKNVITPTTGTTPKGKITNELLKMSLMSAVTLTSKDEGLKVTTTDVRKNESIVSNVTVTIVTLPNAVSTLQSSKPKTETQSSIKTTEIPGSILQPDASPSETGTLSSIPVTIPENTSQSQVIGTEGGKNASTSATSRSYSSIILPVVIALIVITLSVFVLVGLYRMCWKADPGTPENGNDQPQSDKESVKLLTVKTISHESGEHSAQGKTKN.

The signal sequence occupies residues 1-18; it reads MELLQVTILFLLPSICSS. N19, N28, N97, and N103 each carry an N-linked (GlcNAc...) asparagine glycan. Topologically, residues 19-189 are extracellular; it reads NSTGVLEAAN…TSATSRSYSS (171 aa). Polar residues-rich tracts occupy residues 119 to 133 and 145 to 170; these read QSSK…SIKT and ASPS…SQVI. Residues 119 to 182 form a disordered region; that stretch reads QSSKPKTETQ…EGGKNASTSA (64 aa). N-linked (GlcNAc...) asparagine glycosylation is found at N163 and N177. A helical transmembrane segment spans residues 190 to 210; it reads IILPVVIALIVITLSVFVLVG. Residues 211–260 are Cytoplasmic-facing; the sequence is LYRMCWKADPGTPENGNDQPQSDKESVKLLTVKTISHESGEHSAQGKTKN. The residue at position 236 (S236) is a Phosphoserine.

In terms of processing, highly O-glycosylated. Sialic acid-rich glycoprotein.

It is found in the membrane. Functionally, endothelial sialomucin, also called endomucin or mucin-like sialoglycoprotein, which interferes with the assembly of focal adhesion complexes and inhibits interaction between cells and the extracellular matrix. The protein is Endomucin (EMCN) of Pongo abelii (Sumatran orangutan).